Consider the following 76-residue polypeptide: Small ribosomal subunit protein uS17 (76 aa).

The protein belongs to the universal ribosomal protein uS17 family. In terms of assembly, part of the 30S ribosomal subunit.

In terms of biological role, one of the primary rRNA binding proteins, it binds specifically to the 5'-end of 16S ribosomal RNA. This chain is Small ribosomal subunit protein uS17, found in Dinoroseobacter shibae (strain DSM 16493 / NCIMB 14021 / DFL 12).